The following is a 548-amino-acid chain: Chaperonin GroEL (548 aa).

ATP contacts are provided by residues 29–32, Lys50, 86–90, Gly414, 478–480, and Asp494; these read TLGP, DGTTT, and NAA.

Belongs to the chaperonin (HSP60) family. In terms of assembly, forms a cylinder of 14 subunits composed of two heptameric rings stacked back-to-back. Interacts with the co-chaperonin GroES.

Its subcellular location is the cytoplasm. It carries out the reaction ATP + H2O + a folded polypeptide = ADP + phosphate + an unfolded polypeptide.. In terms of biological role, together with its co-chaperonin GroES, plays an essential role in assisting protein folding. The GroEL-GroES system forms a nano-cage that allows encapsulation of the non-native substrate proteins and provides a physical environment optimized to promote and accelerate protein folding. In Alcanivorax borkumensis (strain ATCC 700651 / DSM 11573 / NCIMB 13689 / SK2), this protein is Chaperonin GroEL.